A 111-amino-acid chain; its full sequence is Probable 4-amino-4-deoxy-L-arabinose-phosphoundecaprenol flippase subunit ArnE (111 aa).

The next 3 membrane-spanning stretches (helical) occupy residues 38–58, 61–81, and 91–111; these read LWLG…LLVL, LPVG…TLAA, and PRHW…GSAA. One can recognise an EamA domain in the interval 40 to 109; it reads LGLALICMGA…IISGIIILGS (70 aa).

This sequence belongs to the ArnE family. In terms of assembly, heterodimer of ArnE and ArnF.

It localises to the cell inner membrane. Its pathway is bacterial outer membrane biogenesis; lipopolysaccharide biosynthesis. Functionally, translocates 4-amino-4-deoxy-L-arabinose-phosphoundecaprenol (alpha-L-Ara4N-phosphoundecaprenol) from the cytoplasmic to the periplasmic side of the inner membrane. This chain is Probable 4-amino-4-deoxy-L-arabinose-phosphoundecaprenol flippase subunit ArnE, found in Salmonella newport (strain SL254).